Here is a 144-residue protein sequence, read N- to C-terminus: 3-dehydroquinate dehydratase (144 aa).

Tyr-22 functions as the Proton acceptor in the catalytic mechanism. Residues Asn-71, His-77, and Asp-84 each contribute to the substrate site. The active-site Proton donor is His-97. Residues 98-99 (IS) and Arg-108 each bind substrate.

The protein belongs to the type-II 3-dehydroquinase family. Homododecamer.

It carries out the reaction 3-dehydroquinate = 3-dehydroshikimate + H2O. The protein operates within metabolic intermediate biosynthesis; chorismate biosynthesis; chorismate from D-erythrose 4-phosphate and phosphoenolpyruvate: step 3/7. In terms of biological role, catalyzes a trans-dehydration via an enolate intermediate. In Thermotoga maritima (strain ATCC 43589 / DSM 3109 / JCM 10099 / NBRC 100826 / MSB8), this protein is 3-dehydroquinate dehydratase (aroQ).